The sequence spans 938 residues: Phosphoenolpyruvate carboxylase (938 aa).

Catalysis depends on residues His-151 and Lys-591.

The protein belongs to the PEPCase type 1 family. It depends on Mg(2+) as a cofactor.

It carries out the reaction oxaloacetate + phosphate = phosphoenolpyruvate + hydrogencarbonate. Forms oxaloacetate, a four-carbon dicarboxylic acid source for the tricarboxylic acid cycle. This Roseiflexus castenholzii (strain DSM 13941 / HLO8) protein is Phosphoenolpyruvate carboxylase.